The chain runs to 142 residues: Coactosin-like protein (142 aa).

Ala-2 carries the N-acetylalanine modification. In terms of domain architecture, ADF-H spans 2 to 130; the sequence is ATKIDKEACR…EEDFIKSELK (129 aa). The tract at residues 66–75 is flexible and important for F-actin binding; that stretch reads TGDAMSKRSK. N6-acetyllysine is present on residues Lys-102 and Lys-126.

Belongs to the actin-binding proteins ADF family. Coactosin subfamily. Interacts with 5-lipoxygenase (ALOX5/5LO) in a calcium-independent manner. Binds to F-actin with a stoichiometry of 1:2. As to expression, widely expressed with highest levels in placenta, lung, kidney and peripheral blood leukocytes and lower levels in brain, liver and pancreas.

Its subcellular location is the cytoplasm. It localises to the cytoskeleton. It is found in the nucleus. In terms of biological role, binds to F-actin in a calcium-independent manner. Has no direct effect on actin depolymerization. Acts as a chaperone for ALOX5 (5LO), influencing both its stability and activity in leukotrienes synthesis. The sequence is that of Coactosin-like protein (COTL1) from Homo sapiens (Human).